The chain runs to 150 residues: Arginine repressor (150 aa).

The protein belongs to the ArgR family.

The protein resides in the cytoplasm. The protein operates within amino-acid biosynthesis; L-arginine biosynthesis [regulation]. Functionally, regulates arginine biosynthesis genes. In Ruminiclostridium cellulolyticum (strain ATCC 35319 / DSM 5812 / JCM 6584 / H10) (Clostridium cellulolyticum), this protein is Arginine repressor.